Here is a 207-residue protein sequence, read N- to C-terminus: NADH-quinone oxidoreductase subunit C (207 aa).

This sequence belongs to the complex I 30 kDa subunit family. NDH-1 is composed of 14 different subunits. Subunits NuoB, C, D, E, F, and G constitute the peripheral sector of the complex.

The protein localises to the cell inner membrane. The catalysed reaction is a quinone + NADH + 5 H(+)(in) = a quinol + NAD(+) + 4 H(+)(out). Functionally, NDH-1 shuttles electrons from NADH, via FMN and iron-sulfur (Fe-S) centers, to quinones in the respiratory chain. The immediate electron acceptor for the enzyme in this species is believed to be ubiquinone. Couples the redox reaction to proton translocation (for every two electrons transferred, four hydrogen ions are translocated across the cytoplasmic membrane), and thus conserves the redox energy in a proton gradient. This is NADH-quinone oxidoreductase subunit C from Jannaschia sp. (strain CCS1).